The primary structure comprises 277 residues: Transcription factor WRKY19 (277 aa).

The segment at residues 100–168 is a DNA-binding region (WRKY); sequence QDTASLDDGL…YLGDHTCGQA (69 aa).

It belongs to the WRKY group III family.

The protein localises to the nucleus. Its function is as follows. May play a role in defense responses. This chain is Transcription factor WRKY19, found in Oryza sativa subsp. japonica (Rice).